We begin with the raw amino-acid sequence, 530 residues long: Probable phosphoacetylglucosamine mutase (530 aa).

The Phosphoserine intermediate role is filled by serine 62. Residues serine 62, aspartate 278, aspartate 280, and aspartate 282 each coordinate Mg(2+). Substrate contacts are provided by residues 369–371 (EPN), 481–485 (RPSGT), and arginine 490.

It belongs to the phosphohexose mutase family. Requires Mg(2+) as cofactor.

It catalyses the reaction N-acetyl-alpha-D-glucosamine 1-phosphate = N-acetyl-D-glucosamine 6-phosphate. The protein operates within nucleotide-sugar biosynthesis; UDP-N-acetyl-alpha-D-glucosamine biosynthesis; N-acetyl-alpha-D-glucosamine 1-phosphate from alpha-D-glucosamine 6-phosphate (route I): step 2/2. Catalyzes the conversion of GlcNAc-6-P into GlcNAc-1-P during the synthesis of uridine diphosphate/UDP-GlcNAc, which is a biosynthetic precursor of chitin and also supplies the amino sugars for N-linked oligosaccharides of glycoproteins. This is Probable phosphoacetylglucosamine mutase from Encephalitozoon cuniculi (strain GB-M1) (Microsporidian parasite).